Reading from the N-terminus, the 400-residue chain is Phosphoglycerate kinase (400 aa).

Substrate contacts are provided by residues 20 to 22 (DLN), arginine 35, 58 to 61 (HQGR), arginine 115, and arginine 155. ATP is bound by residues glutamate 330 and 356-359 (GGDT).

It belongs to the phosphoglycerate kinase family. As to quaternary structure, monomer.

The protein resides in the cytoplasm. The catalysed reaction is (2R)-3-phosphoglycerate + ATP = (2R)-3-phospho-glyceroyl phosphate + ADP. The protein operates within carbohydrate degradation; glycolysis; pyruvate from D-glyceraldehyde 3-phosphate: step 2/5. In Haloarcula marismortui (strain ATCC 43049 / DSM 3752 / JCM 8966 / VKM B-1809) (Halobacterium marismortui), this protein is Phosphoglycerate kinase.